A 424-amino-acid polypeptide reads, in one-letter code: Serine--tRNA ligase (424 aa).

233-235 lines the L-serine pocket; sequence TAE. Position 264-266 (264-266) interacts with ATP; that stretch reads RRE. Glutamate 287 provides a ligand contact to L-serine. Residue 351-354 participates in ATP binding; the sequence is EISS. Residue serine 387 participates in L-serine binding.

Belongs to the class-II aminoacyl-tRNA synthetase family. Type-1 seryl-tRNA synthetase subfamily. Homodimer. The tRNA molecule binds across the dimer.

It localises to the cytoplasm. It carries out the reaction tRNA(Ser) + L-serine + ATP = L-seryl-tRNA(Ser) + AMP + diphosphate + H(+). It catalyses the reaction tRNA(Sec) + L-serine + ATP = L-seryl-tRNA(Sec) + AMP + diphosphate + H(+). It participates in aminoacyl-tRNA biosynthesis; selenocysteinyl-tRNA(Sec) biosynthesis; L-seryl-tRNA(Sec) from L-serine and tRNA(Sec): step 1/1. Catalyzes the attachment of serine to tRNA(Ser). Is also able to aminoacylate tRNA(Sec) with serine, to form the misacylated tRNA L-seryl-tRNA(Sec), which will be further converted into selenocysteinyl-tRNA(Sec). The sequence is that of Serine--tRNA ligase from Cyanothece sp. (strain PCC 7425 / ATCC 29141).